The chain runs to 102 residues: NADH-quinone oxidoreductase subunit K (102 aa).

A run of 3 helical transmembrane segments spans residues 5–25, 30–50, and 62–82; these read LAHYLAVAAILFTIGVFGIFV, IIVILMSIELILLAVNINLVA, and IFAMFVLTVAAAEAAVGLAIL.

It belongs to the complex I subunit 4L family. As to quaternary structure, NDH-1 is composed of 14 different subunits. Subunits NuoA, H, J, K, L, M, N constitute the membrane sector of the complex.

It is found in the cell inner membrane. It catalyses the reaction a quinone + NADH + 5 H(+)(in) = a quinol + NAD(+) + 4 H(+)(out). NDH-1 shuttles electrons from NADH, via FMN and iron-sulfur (Fe-S) centers, to quinones in the respiratory chain. The immediate electron acceptor for the enzyme in this species is believed to be ubiquinone. Couples the redox reaction to proton translocation (for every two electrons transferred, four hydrogen ions are translocated across the cytoplasmic membrane), and thus conserves the redox energy in a proton gradient. The polypeptide is NADH-quinone oxidoreductase subunit K (Phenylobacterium zucineum (strain HLK1)).